A 437-amino-acid chain; its full sequence is Mannan endo-1,4-beta-mannosidase A (437 aa).

A signal peptide spans 1-19 (MMMLSKSLLSAATAASALA). A propeptide spanning residues 20–27 (AVLQPVPR) is cleaved from the precursor. Residues 28 to 376 (ASSFVTISGT…VDAINGGTTT (349 aa)) form a catalytic region. An intrachain disulfide couples Cys53 to Cys56. Asn157 and Asn184 each carry an N-linked (GlcNAc...) asparagine glycan. Glu196 (proton donor/acceptor) is an active-site residue. 196–198 (EPR) contributes to the substrate binding site. Cys199 and Cys202 are joined by a disulfide. 2 residues coordinate substrate: Glu232 and Trp274. An N-linked (GlcNAc...) asparagine glycan is attached at Asn277. Cys292 and Cys299 form a disulfide bridge. Catalysis depends on Glu303, which acts as the Nucleophile. Cys311 and Cys361 are disulfide-bonded. N-linked (GlcNAc...) asparagine glycosylation is present at Asn355. Residues 372–399 (GGTTTPPPVSSTTTTSSRTSSTPPPPGG) form a disordered region. The interval 377-399 (PPPVSSTTTTSSRTSSTPPPPGG) is linker. Low complexity predominate over residues 381-392 (SSTTTTSSRTSS). The CBM1 domain maps to 400–435 (SCSPLYGQCGGSGYTGPTCCAQGTCIYSNYWYSQCL).

This sequence belongs to the glycosyl hydrolase 5 (cellulase A) family. As to quaternary structure, monomer.

It is found in the secreted. It carries out the reaction Random hydrolysis of (1-&gt;4)-beta-D-mannosidic linkages in mannans, galactomannans and glucomannans.. Endo-1,4-mannanase that catalyzes the random hydrolysis of (1-&gt;4)-beta-D-mannosidic linkages in mannans and heteromannans. It is a crucial enzyme for depolymerization of seed galactomannans and wood galactoglucomannans. Active against locust bean gum and ivory nut mannan, releasing mainly tri- and disaccharides. Also has transglycosylation activity. Transglycosylation of two mannotrioses into a mannohexaose is the major transglycosylation route. This chain is Mannan endo-1,4-beta-mannosidase A, found in Hypocrea jecorina (strain ATCC 56765 / BCRC 32924 / NRRL 11460 / Rut C-30) (Trichoderma reesei).